We begin with the raw amino-acid sequence, 78 residues long: ATP synthase subunit c (78 aa).

The next 2 membrane-spanning stretches (helical) occupy residues 11–31 and 53–73; these read FIGAGLATIGLGGAGIGVGHV and LFVGIAFAEALGIFSFLIALL.

It belongs to the ATPase C chain family. As to quaternary structure, F-type ATPases have 2 components, F(1) - the catalytic core - and F(0) - the membrane proton channel. F(1) has five subunits: alpha(3), beta(3), gamma(1), delta(1), epsilon(1). F(0) has four main subunits: a(1), b(1), b'(1) and c(10-14). The alpha and beta chains form an alternating ring which encloses part of the gamma chain. F(1) is attached to F(0) by a central stalk formed by the gamma and epsilon chains, while a peripheral stalk is formed by the delta, b and b' chains.

It localises to the cell inner membrane. Functionally, f(1)F(0) ATP synthase produces ATP from ADP in the presence of a proton or sodium gradient. F-type ATPases consist of two structural domains, F(1) containing the extramembraneous catalytic core and F(0) containing the membrane proton channel, linked together by a central stalk and a peripheral stalk. During catalysis, ATP synthesis in the catalytic domain of F(1) is coupled via a rotary mechanism of the central stalk subunits to proton translocation. In terms of biological role, key component of the F(0) channel; it plays a direct role in translocation across the membrane. A homomeric c-ring of between 10-14 subunits forms the central stalk rotor element with the F(1) delta and epsilon subunits. The polypeptide is ATP synthase subunit c (Cereibacter sphaeroides (strain ATCC 17025 / ATH 2.4.3) (Rhodobacter sphaeroides)).